Consider the following 592-residue polypeptide: Aspartate--tRNA(Asp/Asn) ligase (592 aa).

Glutamate 172 is a binding site for L-aspartate. Residues 196–199 (QLFK) are aspartate. Arginine 218 provides a ligand contact to L-aspartate. ATP-binding positions include 218 to 220 (RDE) and glutamine 227. Histidine 450 serves as a coordination point for L-aspartate. Glutamate 484 serves as a coordination point for ATP. Arginine 491 lines the L-aspartate pocket. 536–539 (GLDR) lines the ATP pocket.

Belongs to the class-II aminoacyl-tRNA synthetase family. Type 1 subfamily. As to quaternary structure, homodimer.

It is found in the cytoplasm. It catalyses the reaction tRNA(Asx) + L-aspartate + ATP = L-aspartyl-tRNA(Asx) + AMP + diphosphate. Its function is as follows. Aspartyl-tRNA synthetase with relaxed tRNA specificity since it is able to aspartylate not only its cognate tRNA(Asp) but also tRNA(Asn). Reaction proceeds in two steps: L-aspartate is first activated by ATP to form Asp-AMP and then transferred to the acceptor end of tRNA(Asp/Asn). The polypeptide is Aspartate--tRNA(Asp/Asn) ligase (Thioalkalivibrio sulfidiphilus (strain HL-EbGR7)).